The chain runs to 166 residues: Small ribosomal subunit protein uS4 (166 aa).

One can recognise an S4 RNA-binding domain in the interval 103–165 (RRLQTVVYKK…PTSPYFKKAQ (63 aa)).

The protein belongs to the universal ribosomal protein uS4 family. Part of the 30S ribosomal subunit. Contacts protein S5. The interaction surface between S4 and S5 is involved in control of translational fidelity.

One of the primary rRNA binding proteins, it binds directly to 16S rRNA where it nucleates assembly of the body of the 30S subunit. Its function is as follows. With S5 and S12 plays an important role in translational accuracy. This Ignicoccus hospitalis (strain KIN4/I / DSM 18386 / JCM 14125) protein is Small ribosomal subunit protein uS4.